Reading from the N-terminus, the 415-residue chain is Serine--tRNA ligase (415 aa).

231–233 (TAE) is an L-serine binding site. Position 262-264 (262-264 (RSE)) interacts with ATP. Residue Glu-285 participates in L-serine binding. An ATP-binding site is contributed by 349–352 (EISS). Ser-383 lines the L-serine pocket.

Belongs to the class-II aminoacyl-tRNA synthetase family. Type-1 seryl-tRNA synthetase subfamily. In terms of assembly, homodimer. The tRNA molecule binds across the dimer.

It localises to the cytoplasm. The enzyme catalyses tRNA(Ser) + L-serine + ATP = L-seryl-tRNA(Ser) + AMP + diphosphate + H(+). It carries out the reaction tRNA(Sec) + L-serine + ATP = L-seryl-tRNA(Sec) + AMP + diphosphate + H(+). Its pathway is aminoacyl-tRNA biosynthesis; selenocysteinyl-tRNA(Sec) biosynthesis; L-seryl-tRNA(Sec) from L-serine and tRNA(Sec): step 1/1. Its function is as follows. Catalyzes the attachment of serine to tRNA(Ser). Is also able to aminoacylate tRNA(Sec) with serine, to form the misacylated tRNA L-seryl-tRNA(Sec), which will be further converted into selenocysteinyl-tRNA(Sec). This chain is Serine--tRNA ligase, found in Helicobacter pylori (strain HPAG1).